The sequence spans 279 residues: 4-hydroxy-3-methylbut-2-enyl diphosphate reductase (279 aa).

Cys12 contributes to the [4Fe-4S] cluster binding site. (2E)-4-hydroxy-3-methylbut-2-enyl diphosphate contacts are provided by His41 and His74. Positions 41 and 74 each coordinate dimethylallyl diphosphate. Isopentenyl diphosphate contacts are provided by His41 and His74. Position 96 (Cys96) interacts with [4Fe-4S] cluster. His124 serves as a coordination point for (2E)-4-hydroxy-3-methylbut-2-enyl diphosphate. His124 lines the dimethylallyl diphosphate pocket. An isopentenyl diphosphate-binding site is contributed by His124. Residue Glu126 is the Proton donor of the active site. A (2E)-4-hydroxy-3-methylbut-2-enyl diphosphate-binding site is contributed by Thr164. Cys192 is a binding site for [4Fe-4S] cluster. (2E)-4-hydroxy-3-methylbut-2-enyl diphosphate is bound by residues Ser220, Ser221, Asn222, and Ser263. Dimethylallyl diphosphate-binding residues include Ser220, Ser221, Asn222, and Ser263. The isopentenyl diphosphate site is built by Ser220, Ser221, Asn222, and Ser263.

It belongs to the IspH family. [4Fe-4S] cluster is required as a cofactor.

The enzyme catalyses isopentenyl diphosphate + 2 oxidized [2Fe-2S]-[ferredoxin] + H2O = (2E)-4-hydroxy-3-methylbut-2-enyl diphosphate + 2 reduced [2Fe-2S]-[ferredoxin] + 2 H(+). It catalyses the reaction dimethylallyl diphosphate + 2 oxidized [2Fe-2S]-[ferredoxin] + H2O = (2E)-4-hydroxy-3-methylbut-2-enyl diphosphate + 2 reduced [2Fe-2S]-[ferredoxin] + 2 H(+). It participates in isoprenoid biosynthesis; dimethylallyl diphosphate biosynthesis; dimethylallyl diphosphate from (2E)-4-hydroxy-3-methylbutenyl diphosphate: step 1/1. It functions in the pathway isoprenoid biosynthesis; isopentenyl diphosphate biosynthesis via DXP pathway; isopentenyl diphosphate from 1-deoxy-D-xylulose 5-phosphate: step 6/6. Its function is as follows. Catalyzes the conversion of 1-hydroxy-2-methyl-2-(E)-butenyl 4-diphosphate (HMBPP) into a mixture of isopentenyl diphosphate (IPP) and dimethylallyl diphosphate (DMAPP). Acts in the terminal step of the DOXP/MEP pathway for isoprenoid precursor biosynthesis. This Clostridioides difficile (strain 630) (Peptoclostridium difficile) protein is 4-hydroxy-3-methylbut-2-enyl diphosphate reductase.